The primary structure comprises 506 residues: Ribose import ATP-binding protein RbsA 1 (506 aa).

ABC transporter domains are found at residues 5-241 and 254-498; these read LALT…VGRR and RDAA…TSDA. Position 37–44 (37–44) interacts with ATP; sequence GENGAGKS.

This sequence belongs to the ABC transporter superfamily. Ribose importer (TC 3.A.1.2.1) family. As to quaternary structure, the complex is composed of an ATP-binding protein (RbsA), two transmembrane proteins (RbsC) and a solute-binding protein (RbsB).

Its subcellular location is the cell inner membrane. The catalysed reaction is D-ribose(out) + ATP + H2O = D-ribose(in) + ADP + phosphate + H(+). In terms of biological role, part of the ABC transporter complex RbsABC involved in ribose import. Responsible for energy coupling to the transport system. In Burkholderia thailandensis (strain ATCC 700388 / DSM 13276 / CCUG 48851 / CIP 106301 / E264), this protein is Ribose import ATP-binding protein RbsA 1.